The primary structure comprises 210 residues: UPF0502 protein Sama_1967 (210 aa).

This sequence belongs to the UPF0502 family.

The sequence is that of UPF0502 protein Sama_1967 from Shewanella amazonensis (strain ATCC BAA-1098 / SB2B).